Reading from the N-terminus, the 155-residue chain is S-ribosylhomocysteine lyase (155 aa).

H57, H61, and C124 together coordinate Fe cation.

The protein belongs to the LuxS family. As to quaternary structure, homodimer. Fe cation is required as a cofactor.

The catalysed reaction is S-(5-deoxy-D-ribos-5-yl)-L-homocysteine = (S)-4,5-dihydroxypentane-2,3-dione + L-homocysteine. In terms of biological role, involved in the synthesis of autoinducer 2 (AI-2) which is secreted by bacteria and is used to communicate both the cell density and the metabolic potential of the environment. The regulation of gene expression in response to changes in cell density is called quorum sensing. Catalyzes the transformation of S-ribosylhomocysteine (RHC) to homocysteine (HC) and 4,5-dihydroxy-2,3-pentadione (DPD). In Listeria monocytogenes serotype 4b (strain CLIP80459), this protein is S-ribosylhomocysteine lyase.